The primary structure comprises 421 residues: Serine--tRNA ligase (421 aa).

Position 229–231 (229–231) interacts with L-serine; sequence TAE. 260–262 serves as a coordination point for ATP; sequence RAE. Residue Glu-283 participates in L-serine binding. 347–350 is an ATP binding site; it reads EISS. Ser-383 contributes to the L-serine binding site.

It belongs to the class-II aminoacyl-tRNA synthetase family. Type-1 seryl-tRNA synthetase subfamily. In terms of assembly, homodimer. The tRNA molecule binds across the dimer.

The protein resides in the cytoplasm. The catalysed reaction is tRNA(Ser) + L-serine + ATP = L-seryl-tRNA(Ser) + AMP + diphosphate + H(+). It carries out the reaction tRNA(Sec) + L-serine + ATP = L-seryl-tRNA(Sec) + AMP + diphosphate + H(+). It functions in the pathway aminoacyl-tRNA biosynthesis; selenocysteinyl-tRNA(Sec) biosynthesis; L-seryl-tRNA(Sec) from L-serine and tRNA(Sec): step 1/1. Functionally, catalyzes the attachment of serine to tRNA(Ser). Is also able to aminoacylate tRNA(Sec) with serine, to form the misacylated tRNA L-seryl-tRNA(Sec), which will be further converted into selenocysteinyl-tRNA(Sec). The sequence is that of Serine--tRNA ligase from Desulfitobacterium hafniense (strain DSM 10664 / DCB-2).